A 59-amino-acid chain; its full sequence is Small ribosomal subunit protein bS21 (59 aa).

This sequence belongs to the bacterial ribosomal protein bS21 family.

The protein is Small ribosomal subunit protein bS21 of Acholeplasma laidlawii (strain PG-8A).